The following is a 118-amino-acid chain: Heavy metal-associated isoprenylated plant protein 47 (118 aa).

Residues 1–67 (MRIKLSVNSE…KACHVTLETL (67 aa)) form the HMA domain. Cysteine 115 is modified (cysteine methyl ester). A lipid anchor (S-farnesyl cysteine) is attached at cysteine 115. The propeptide at 116 to 118 (LVM) is removed in mature form.

It belongs to the HIPP family.

Functionally, heavy-metal-binding protein. The polypeptide is Heavy metal-associated isoprenylated plant protein 47 (Arabidopsis thaliana (Mouse-ear cress)).